The primary structure comprises 220 residues: Adenylate kinase (220 aa).

An ATP-binding site is contributed by 10–15 (GSGKST). An NMP region spans residues 30-59 (SSGDIIRAEISSRTPLGLEMEKYLSRGDLI). Residues S31, R36, 57-59 (DLI), 83-86 (GYPR), and Q90 contribute to the AMP site. An LID region spans residues 124 to 161 (GRRICSKCGAVYHIEFNPPKIPGKCDICGGDLIQRPDD). R125 provides a ligand contact to ATP. The Zn(2+) site is built by C128 and C131. 134–135 (VY) contacts ATP. 2 residues coordinate Zn(2+): C148 and C151. Residues R158 and R169 each contribute to the AMP site. Residue G197 coordinates ATP.

It belongs to the adenylate kinase family. As to quaternary structure, monomer.

It is found in the cytoplasm. It catalyses the reaction AMP + ATP = 2 ADP. It functions in the pathway purine metabolism; AMP biosynthesis via salvage pathway; AMP from ADP: step 1/1. In terms of biological role, catalyzes the reversible transfer of the terminal phosphate group between ATP and AMP. Plays an important role in cellular energy homeostasis and in adenine nucleotide metabolism. The polypeptide is Adenylate kinase (Pyrococcus horikoshii (strain ATCC 700860 / DSM 12428 / JCM 9974 / NBRC 100139 / OT-3)).